Consider the following 29-residue polypeptide: Small toxic protein ZorO (29 aa).

Residues 10–27 traverse the membrane as a helical segment; that stretch reads VLIAVLELLVALLRLIDL.

The protein localises to the cell inner membrane. Toxic component of a type I toxin-antitoxin (TA) system. Expression in the absence of its cognate antitoxin (small sRNA orzO) leads to cell stasis and a decrease in colony-forming units. Repression of ZorO toxicity requires base pairing between zorO mRNA and sRNA OrzO, as well as RNase III (rnc), suggesting the mRNA is degraded. Base pairing occurs between 18 bases in the 5' UTR of zorO mRNA and the 5' end of OrzO sRNA. sRNA OrzP, which differs only in 4 of these 18 bases, does not repress ZorO toxicity. Integration of the protein into the inner membrane damages membrane integrity and affects membrane potential. It leads to increased levels of hydroxyl radicals. In Escherichia coli O157:H7, this protein is Small toxic protein ZorO.